The primary structure comprises 212 residues: phospholipase A2 inhibitor and Ly6/PLAUR domain-containing protein (212 aa).

The first 24 residues, 1-24 (MILFRRHRTFLLAFTLLCTLLGLG), serve as a signal peptide directing secretion. The 91-residue stretch at 27–117 (LTCEVCKGSG…NSGSVPPPLN (91 aa)) folds into the UPAR/Ly6 domain. 7 disulfides stabilise this stretch: C29–C53, C32–C39, C46–C74, C80–C101, C102–C107, C126–C152, and C145–C173.

This sequence belongs to the CNF-like-inhibitor family.

It is found in the secreted. The polypeptide is phospholipase A2 inhibitor and Ly6/PLAUR domain-containing protein (Pinlyp) (Mus musculus (Mouse)).